We begin with the raw amino-acid sequence, 151 residues long: UPF0208 membrane protein YfbV (151 aa).

Over 1-45 (MSTPDNRSVNFFSLFRRGQHYAKTWPMEKRLAPVFVENRVIRMTR) the chain is Cytoplasmic. The chain crosses the membrane as a helical span at residues 46–65 (YAIRFMPPVAVFTLCWQIAL). Over 66 to 68 (GGQ) the chain is Periplasmic. A helical membrane pass occupies residues 69-91 (LGPAVATALFALSLPMQGLWWLG). Residues 92 to 151 (KRSLTPLPPSILNWFYEVRGKLQEAGQALAPVEGKPDYQALADTLKRAFKQLDKTFLDDL) lie on the Cytoplasmic side of the membrane.

Belongs to the UPF0208 family.

The protein resides in the cell inner membrane. The protein is UPF0208 membrane protein YfbV (yfbV) of Salmonella typhi.